Consider the following 399-residue polypeptide: Large envelope protein (399 aa).

Methionine 1 is modified (N-acetylmethionine). Residue glycine 2 is the site of N-myristoyl glycine; by host attachment. A pre-S1 region spans residues 2 to 118; sequence GLSWTVPLEW…PPLRDTHPQA (117 aa). A pre-S region spans residues 2–173; the sequence is GLSWTVPLEW…FSRIGDPAPN (172 aa). Residues 2-180 are Virion surface; in external conformation-facing; the sequence is GLSWTVPLEW…APNMEGITSG (179 aa). The Intravirion; in internal conformation segment spans residues 2–252; that stretch reads GLSWTVPLEW…PGYRWMCLRR (251 aa). N-linked (GlcNAc...) asparagine glycosylation is present at serine 4. The segment at 85–109 is disordered; the sequence is KTLPADPPPASTNRQSGRQPTPITP. Polar residues predominate over residues 95–105; that stretch reads STNRQSGRQPT. The segment at 119 to 173 is pre-S2; that stretch reads MQWNSTTFHQALQDPRVRGLYFPAGGSSSGTVNPVPTTASLISSIFSRIGDPAPN. The chain crosses the membrane as a helical span at residues 181-201; the sequence is FLGPLLVLQAGFFLLTKILTI. Residues 202–252 lie on the Intravirion; in external conformation side of the membrane; it reads PQSLDSWWTSLNFLGGAPVCLGQNSQSPTSNHSPTSCPPICPGYRWMCLRR. Residues 253–273 traverse the membrane as a helical segment; it reads FIIFLFILLLCLIFLLVLLGY. Topologically, residues 274–347 are virion surface; the sequence is QGMLPVCPLI…WASARFSWLS (74 aa). Asparagine 319 carries an N-linked (GlcNAc...) asparagine; by host glycan. The helical transmembrane segment at 348–368 threads the bilayer; sequence LLVPFVQWFAGLSPTVWLSVI. At 369 to 374 the chain is on the intravirion side; the sequence is WMMWYW. Residues 375–397 form a helical membrane-spanning segment; the sequence is GPSLYNILSPFIPLLPIFFCLWV. Residues 398 to 399 are Virion surface-facing; sequence YI.

It belongs to the orthohepadnavirus major surface antigen family. As to quaternary structure, in its internal form (Li-HBsAg), interacts with the capsid protein and with the isoform S. Interacts with host chaperone CANX. Associates with host chaperone CANX through its pre-S2 N glycan; this association may be essential for isoform M proper secretion. In terms of assembly, interacts with isoform L. Interacts with the antigens of satellite virus HDV (HDVAgs); this interaction is required for encapsidation of HDV genomic RNA. Isoform M is N-terminally acetylated by host at a ratio of 90%, and N-glycosylated by host at the pre-S2 region. In terms of processing, myristoylated.

It localises to the virion membrane. In terms of biological role, the large envelope protein exists in two topological conformations, one which is termed 'external' or Le-HBsAg and the other 'internal' or Li-HBsAg. In its external conformation the protein attaches the virus to cell receptors and thereby initiating infection. This interaction determines the species specificity and liver tropism. This attachment induces virion internalization predominantly through caveolin-mediated endocytosis. The large envelope protein also assures fusion between virion membrane and endosomal membrane. In its internal conformation the protein plays a role in virion morphogenesis and mediates the contact with the nucleocapsid like a matrix protein. Functionally, the middle envelope protein plays an important role in the budding of the virion. It is involved in the induction of budding in a nucleocapsid independent way. In this process the majority of envelope proteins bud to form subviral lipoprotein particles of 22 nm of diameter that do not contain a nucleocapsid. The polypeptide is Large envelope protein (Hepatitis B virus genotype E (isolate Cote d'Ivoire/ABI-129/2003) (HBV-E)).